We begin with the raw amino-acid sequence, 95 residues long: Small ribosomal subunit protein uS15 (95 aa).

It belongs to the universal ribosomal protein uS15 family. In terms of assembly, part of the 30S ribosomal subunit. Forms a bridge to the 50S subunit in the 70S ribosome, contacting the 23S rRNA.

Functionally, one of the primary rRNA binding proteins, it binds directly to 16S rRNA where it helps nucleate assembly of the platform of the 30S subunit by binding and bridging several RNA helices of the 16S rRNA. In terms of biological role, forms an intersubunit bridge (bridge B4) with the 23S rRNA of the 50S subunit in the ribosome. The chain is Small ribosomal subunit protein uS15 from Sulfurihydrogenibium sp. (strain YO3AOP1).